Reading from the N-terminus, the 242-residue chain is HTH-type transcriptional regulator GadW (242 aa).

Positions 139–236 (GKVERLISFD…GVTPHQFAQH (98 aa)) constitute an HTH araC/xylS-type domain. 2 DNA-binding regions (H-T-H motif) span residues 156 to 177 (RDIA…QDEN) and 203 to 226 (LHTI…RQYY).

In terms of assembly, homodimer.

Functionally, depending on the conditions (growth phase and medium), acts as a positive or negative regulator of gadA and gadBC. Repression occurs directly or via the repression of the expression of gadX. Activation occurs directly by the binding of GadW to the gadA and gadBC promoters. This is HTH-type transcriptional regulator GadW (gadW) from Escherichia coli (strain K12).